The primary structure comprises 354 residues: Protein-glutamate methylesterase/protein-glutamine glutaminase 2 (354 aa).

One can recognise a Response regulatory domain in the interval 5–122; the sequence is RVLIVDDSAL…SLKIKEVAEE (118 aa). Residue D56 is modified to 4-aspartylphosphate. A CheB-type methylesterase domain is found at 159 to 354; it reads PDTSFKKLIL…IADRIVELVR (196 aa). Active-site residues include S172, H199, and D298.

The protein belongs to the CheB family. In terms of processing, phosphorylated by CheA. Phosphorylation of the N-terminal regulatory domain activates the methylesterase activity.

It is found in the cytoplasm. The catalysed reaction is [protein]-L-glutamate 5-O-methyl ester + H2O = L-glutamyl-[protein] + methanol + H(+). It carries out the reaction L-glutaminyl-[protein] + H2O = L-glutamyl-[protein] + NH4(+). Involved in chemotaxis. Part of a chemotaxis signal transduction system that modulates chemotaxis in response to various stimuli. Catalyzes the demethylation of specific methylglutamate residues introduced into the chemoreceptors (methyl-accepting chemotaxis proteins or MCP) by CheR. Also mediates the irreversible deamidation of specific glutamine residues to glutamic acid. This is Protein-glutamate methylesterase/protein-glutamine glutaminase 2 from Carboxydothermus hydrogenoformans (strain ATCC BAA-161 / DSM 6008 / Z-2901).